A 1528-amino-acid chain; its full sequence is Multidrug resistance-associated protein 1 (1528 aa).

The Extracellular portion of the chain corresponds to 1–33 (MALRSFCSADGSDPLWDWNVTWHTSNPDFTKCF). A glycan (N-linked (GlcNAc...) asparagine) is linked at Asn19. The helical transmembrane segment at 34 to 54 (QNTVLTWVPCFYLWSCFPLYF) threads the bilayer. Residues 55 to 74 (FYLSRHDRGYIQMTHLNKTK) lie on the Cytoplasmic side of the membrane. A helical membrane pass occupies residues 75 to 95 (TALGFFLWIICWADLFYSFWE). The Extracellular segment spans residues 96–100 (RSQGV). The helical transmembrane segment at 101–121 (LRAPVLLVSPTLLGITMLLAT) threads the bilayer. Residues 122-133 (FLIQLERRKGVQ) lie on the Cytoplasmic side of the membrane. The helical transmembrane segment at 134–154 (SSGIMLTFWLVALLCALAILR) threads the bilayer. Residues 155–172 (SKIISALKKDAHVDVFRD) are Extracellular-facing. Residues 173 to 193 (STFYLYFTLVLVQLVLSCFSD) traverse the membrane as a helical segment. Residues 194-317 (CSPLFSETVH…KDREPSLFKV (124 aa)) lie on the Cytoplasmic side of the membrane. Phosphotyrosine is present on Tyr277. Residue Ser290 is modified to Phosphoserine. The chain crosses the membrane as a helical span at residues 318–338 (LYKTFGPYFLMSFLYKALHDL). The 284-residue stretch at 326-609 (FLMSFLYKAL…LPMVISSIVQ (284 aa)) folds into the ABC transmembrane type-1 1 domain. Residues 339-364 (MMFAGPKILELIINFVNDREAPDWQG) lie on the Extracellular side of the membrane. A helical membrane pass occupies residues 365 to 385 (YFYTALLFVSACLQTLALHQY). At 386–441 (FHICFVSGMRIKTAVVGAVYRKALLITNAARKSSTVGEIVNLMSVDAQRFMDLATY) the chain is on the cytoplasmic side. Residues 442-462 (INMIWSAPLQVILALYFLWLS) traverse the membrane as a helical segment. Residues 463-465 (LGP) are Extracellular-facing. Residues 466 to 486 (SVLAGVAVMILMVPLNAVMAM) traverse the membrane as a helical segment. Topologically, residues 487 to 548 (KTKTYQVAHM…VLKKSAYLAA (62 aa)) are cytoplasmic. Residue Lys504 is modified to N6-succinyllysine. Residues 549–569 (VGTFTWVCTPFLVALSTFAVF) traverse the membrane as a helical segment. Residues 570–591 (VTVDERNILDAKKAFVSLALFN) lie on the Extracellular side of the membrane. A helical membrane pass occupies residues 592–612 (ILRFPLNILPMVISSIVQASV). Topologically, residues 613–963 (SLKRLRIFLS…VQLSVYWNYM (351 aa)) are cytoplasmic. Residues 644–868 (ITVKNATFTW…DGAFAEFLRT (225 aa)) enclose the ABC transporter 1 domain. Position 678-685 (678-685 (GQVGCGKS)) interacts with ATP. 2 disordered regions span residues 876–895 (LASEDDSVSGSGKESKPVEN) and 909–929 (RHLSNSSSHSGDTSQQHSSIA). A phosphoserine mark is found at Ser878, Ser882, Ser912, and Ser927. Over residues 910–929 (HLSNSSSHSGDTSQQHSSIA) the composition is skewed to polar residues. A helical membrane pass occupies residues 964–984 (KAIGLFITFLSIFLFLCNHVS). An ABC transmembrane type-1 2 domain is found at 971-1253 (TFLSIFLFLC…LVRMSSEMET (283 aa)). At 985-1022 (ALASNYWLSLWTDDPPVVNGTQANRNFRLSVYGALGIL) the chain is on the extracellular side. Asn1003 carries N-linked (GlcNAc...) asparagine glycosylation. Residues 1023 to 1043 (QGAAIFGYSMAVSIGGIFASR) form a helical membrane-spanning segment. The Cytoplasmic segment spans residues 1044–1086 (RLHLDLLYNVLRSPMSFFERTPSGNLVNRFSKELDTVDSMIPQ). A helical membrane pass occupies residues 1087–1107 (VIKMFMGSLFSVIGAVIIILL). Position 1108 (Ala1108) is a topological domain, extracellular. A helical transmembrane segment spans residues 1109–1129 (TPIAAVIIPPLGLVYFFVQRF). The Cytoplasmic portion of the chain corresponds to 1130 to 1200 (YVASSRQLKR…VANRWLAVRL (71 aa)). Residues 1201 to 1221 (ECVGNCIVLFAALFAVISRHS) traverse the membrane as a helical segment. The Extracellular segment spans residues 1222-1223 (LS). Residues 1224–1244 (AGLVGLSVSYSLQITAYLNWL) form a helical membrane-spanning segment. The Cytoplasmic segment spans residues 1245-1528 (VRMSSEMETN…YSMAKDAGLV (284 aa)). Positions 1290 to 1524 (VEFRDYCLRY…RGIFYSMAKD (235 aa)) constitute an ABC transporter 2 domain. 1324-1331 (GRTGAGKS) provides a ligand contact to ATP.

This sequence belongs to the ABC transporter superfamily. ABCC family. Conjugate transporter (TC 3.A.1.208) subfamily.

The protein localises to the cell membrane. The protein resides in the basolateral cell membrane. The enzyme catalyses ATP + H2O + xenobioticSide 1 = ADP + phosphate + xenobioticSide 2.. It catalyses the reaction an S-substituted glutathione(in) + ATP + H2O = an S-substituted glutathione(out) + ADP + phosphate + H(+). The catalysed reaction is leukotriene C4(in) + ATP + H2O = leukotriene C4(out) + ADP + phosphate + H(+). It carries out the reaction sphing-4-enine 1-phosphate(in) + ATP + H2O = sphing-4-enine 1-phosphate(out) + ADP + phosphate + H(+). The enzyme catalyses 17beta-estradiol 17-O-(beta-D-glucuronate)(in) + ATP + H2O = 17beta-estradiol 17-O-(beta-D-glucuronate)(out) + ADP + phosphate + H(+). It catalyses the reaction vincristine(in) + ATP + H2O = vincristine(out) + ADP + phosphate + H(+). The catalysed reaction is daunorubicin(in) + ATP + H2O = daunorubicin(out) + ADP + phosphate + H(+). It carries out the reaction 2',3'-cGAMP(in) + ATP + H2O = 2',3'-cGAMP(out) + ADP + phosphate + H(+). The enzyme catalyses S-[(2E,6E,10E)-geranylgeranyl]-L-glutathione(in) + ATP + H2O = S-[(2E,6E,10E)-geranylgeranyl]-L-glutathione(out) + ADP + phosphate + H(+). It catalyses the reaction prostaglandin A2-S-(R)-glutathione(in) + ATP + H2O = prostaglandin A2-S-(R)-glutathione(out) + ADP + phosphate + H(+). The catalysed reaction is prostaglandin A2-S-(S)-glutathione(in) + ATP + H2O = prostaglandin A2-S-(S)-glutathione(out) + ADP + phosphate + H(+). With respect to regulation, MK 571 inhibits sphingosine 1-phosphate and leukotriene C4 export. Its function is as follows. Mediates export of organic anions and drugs from the cytoplasm. Mediates ATP-dependent transport of glutathione and glutathione conjugates, leukotriene C4, estradiol-17-beta-o-glucuronide, methotrexate, antiviral drugs and other xenobiotics. Confers resistance to anticancer drugs by decreasing accumulation of drugs in cells, and by mediating ATP- and GSH-dependent drug export. Hydrolyzes ATP with low efficiency. Catalyzes the export of sphingosine 1-phosphate from mast cells independently of their degranulation. Participates in inflammatory response by allowing export of leukotriene C4 from leukotriene C4-synthesizing cells. Mediates ATP-dependent, GSH-independent cyclic GMP-AMP (cGAMP) export. Thus, by limiting intracellular cGAMP concentrations negatively regulates the cGAS-STING pathway. Exports S-geranylgeranyl-glutathione (GGG) in lymphoid cells and stromal compartments of lymphoid organs. ABCC1 (via extracellular transport) with GGT5 (via GGG catabolism) establish GGG gradients within lymphoid tissues to position P2RY8-positive lymphocytes at germinal centers in lymphoid follicles and restrict their chemotactic transmigration from blood vessels to the bone marrow parenchyma. Mediates basolateral export of GSH-conjugated R- and S-prostaglandin A2 diastereomers in polarized epithelial cells. This is Multidrug resistance-associated protein 1 from Mus musculus (Mouse).